A 334-amino-acid chain; its full sequence is BRISC and BRCA1-A complex member 1 (334 aa).

N-acetylmethionine is present on methionine 1. The segment at 1–79 (MEVAEANSPT…VPGAVPKPWQ (79 aa)) is disordered. Serine 8 carries the phosphoserine modification. Acidic residues predominate over residues 10–25 (TEEEEEEEEEEGEEPI). Phosphoserine occurs at positions 34 and 54. Over residues 59-68 (EAATADDGAA) the composition is skewed to low complexity. The tract at residues 100 to 303 (VIICLDLSEE…LELHNCVAKL (204 aa)) is VWFA-like.

This sequence belongs to the BABAM1 family. As to quaternary structure, component of the ARISC complex, at least composed of UIMC1/RAP80, ABRAXAS1, BRCC3/BRCC36, BABAM2 and BABAM1/NBA1. Component of the BRCA1-A complex, at least composed of BRCA1, BARD1, UIMC1/RAP80, ABRAXAS1, BRCC3/BRCC36, BABAM2 and BABAM1/NBA1. In the BRCA1-A complex, interacts directly with ABRAXAS1 and BABAM2. Component of the BRISC complex, at least composed of ABRAXAS2, BRCC3/BRCC36, BABAM2 and BABAM1/NBA1. Identified in a complex with SHMT2 and the other subunits of the BRISC complex.

It localises to the cytoplasm. It is found in the nucleus. Functionally, component of the BRCA1-A complex, a complex that specifically recognizes 'Lys-63'-linked ubiquitinated histones H2A and H2AX at DNA lesions sites, leading to target the BRCA1-BARD1 heterodimer to sites of DNA damage at double-strand breaks (DSBs). The BRCA1-A complex also possesses deubiquitinase activity that specifically removes 'Lys-63'-linked ubiquitin on histones H2A and H2AX. In the BRCA1-A complex, it is required for the complex integrity and its localization at DSBs. Component of the BRISC complex, a multiprotein complex that specifically cleaves 'Lys-63'-linked ubiquitin in various substrates. In these 2 complexes, it is probably required to maintain the stability of BABAM2 and help the 'Lys-63'-linked deubiquitinase activity mediated by BRCC3/BRCC36 component. The BRISC complex is required for normal mitotic spindle assembly and microtubule attachment to kinetochores via its role in deubiquitinating NUMA1. Plays a role in interferon signaling via its role in the deubiquitination of the interferon receptor IFNAR1; deubiquitination increases IFNAR1 activity by enhancing its stability and cell surface expression. Down-regulates the response to bacterial lipopolysaccharide (LPS) via its role in IFNAR1 deubiquitination. The chain is BRISC and BRCA1-A complex member 1 (Babam1) from Rattus norvegicus (Rat).